The sequence spans 468 residues: Uronate isomerase (468 aa).

It belongs to the metallo-dependent hydrolases superfamily. Uronate isomerase family.

The catalysed reaction is D-glucuronate = D-fructuronate. It carries out the reaction aldehydo-D-galacturonate = keto-D-tagaturonate. The protein operates within carbohydrate metabolism; pentose and glucuronate interconversion. This Marinomonas sp. (strain MWYL1) protein is Uronate isomerase.